Here is a 359-residue protein sequence, read N- to C-terminus: Putative cyclin-F1-2 (359 aa).

It belongs to the cyclin family. Cyclin F subfamily.

This Oryza sativa subsp. japonica (Rice) protein is Putative cyclin-F1-2 (CYCF1-2).